We begin with the raw amino-acid sequence, 483 residues long: ATP synthase subunit beta (483 aa).

162–169 (GGAGVGKT) contacts ATP.

Belongs to the ATPase alpha/beta chains family. F-type ATPases have 2 components, CF(1) - the catalytic core - and CF(0) - the membrane proton channel. CF(1) has five subunits: alpha(3), beta(3), gamma(1), delta(1), epsilon(1). CF(0) has four main subunits: a(1), b(1), b'(1) and c(9-12).

The protein resides in the cellular thylakoid membrane. The enzyme catalyses ATP + H2O + 4 H(+)(in) = ADP + phosphate + 5 H(+)(out). Produces ATP from ADP in the presence of a proton gradient across the membrane. The catalytic sites are hosted primarily by the beta subunits. The polypeptide is ATP synthase subunit beta (Synechocystis sp. (strain ATCC 27184 / PCC 6803 / Kazusa)).